The chain runs to 328 residues: Mitochondrial GTPase 1 (328 aa).

In terms of domain architecture, CP-type G spans 10–199 (KTTLKRLRDS…MVDTPGIMLP (190 aa)). Residues 57–60 (NKCD), 143–148 (NVGKSS), and glycine 195 each bind GTP.

This sequence belongs to the TRAFAC class YlqF/YawG GTPase family. MTG1 subfamily.

The protein localises to the mitochondrion inner membrane. Its function is as follows. Mitochondrial GTPase involved in assembly of the large ribosomal subunit. Plays a role in expression of the mitochondrial translational machinery. This chain is Mitochondrial GTPase 1, found in Schizosaccharomyces japonicus (strain yFS275 / FY16936) (Fission yeast).